Reading from the N-terminus, the 853-residue chain is Aminotransferase PigE (853 aa).

Residue 503-504 (GT) participates in pyridoxal 5'-phosphate binding. Lysine 645 bears the N6-(pyridoxal phosphate)lysine mark. Threonine 680 contacts pyridoxal 5'-phosphate.

Belongs to the class-III pyridoxal-phosphate-dependent aminotransferase family. As to quaternary structure, homodimer. It depends on pyridoxal 5'-phosphate as a cofactor.

The protein operates within antibiotic biosynthesis; prodigiosin biosynthesis. Functionally, involved in the biosynthesis of 2-methyl-3-n-amyl-pyrrole (MAP), one of the terminal products involved in the biosynthesis of the red antibiotic prodigiosin (Pig). Catalyzes the transamination to the aldehyde group of 3-acetyloctanal, resulting in an aminoketone, which spontaneously cyclizes to yield the dihydro form of MAP (H2MAP). The protein is Aminotransferase PigE of Serratia sp. (strain ATCC 39006) (Prodigiosinella confusarubida).